The sequence spans 62 residues: Metallothionein-like protein 3A (62 aa).

The protein belongs to the metallothionein superfamily. Type 15 family.

Functionally, metallothioneins have a high content of cysteine residues that bind various heavy metals. This Oryza sativa subsp. indica (Rice) protein is Metallothionein-like protein 3A (MT3A).